Here is a 454-residue protein sequence, read N- to C-terminus: Ornithine aminotransferase (454 aa).

Residues G124, T125, and Q267 each coordinate pyridoxal 5'-phosphate. Position 293 is an N6-(pyridoxal phosphate)lysine (K293). Position 321 (T321) interacts with pyridoxal 5'-phosphate.

The protein belongs to the class-III pyridoxal-phosphate-dependent aminotransferase family. Homotetramer; dimer of dimers. The cofactor is pyridoxal 5'-phosphate.

It catalyses the reaction L-ornithine + 2-oxoglutarate = L-glutamate 5-semialdehyde + L-glutamate. The enzyme catalyses L-lysine + 2-oxoglutarate = (S)-2-amino-6-oxohexanoate + L-glutamate. In terms of biological role, catalyzes the conversion of L-ornithine and 2-oxoglutarate to L-glutamate semialdehyde and L-glutamate. L-ornithine is the best substrate, but the enzyme also shows good activity toward L-lysine, and low activity toward D-ornithine, D-lysine, 5-aminovalerate, 6-aminohexanoate and GABA. The enzyme activity is specific for 2-oxoglutarate. This Pyrococcus horikoshii (strain ATCC 700860 / DSM 12428 / JCM 9974 / NBRC 100139 / OT-3) protein is Ornithine aminotransferase.